The following is a 53-amino-acid chain: Lantibiotic paenibacillin (53 aa).

A propeptide spanning residues 1 to 24 (MKVDQMFDLDLRKSYEASELSPQA) is cleaved from the precursor. A24 bears the N-acetylalanine mark. S25 carries the post-translational modification 2,3-didehydroalanine (Ser). 2,3-didehydrobutyrine occurs at positions 29 and 30. The segment at residues 34–38 (SKAVC) is a cross-link (lanthionine (Ser-Cys)). Cross-links (beta-methyllanthionine (Thr-Cys)) lie at residues 40 to 43 (TLTC), 42 to 45 (TCIC), and 46 to 49 (TGSC). The segment at residues 48–52 (SCSNC) is a cross-link (lanthionine (Ser-Cys)). The residue at position 50 (S50) is a 2,3-didehydroalanine (Ser).

In terms of processing, maturation of lantibiotics involves the enzymatic conversion of Thr, and Ser into dehydrated AA and the formation of thioether bonds with cysteine. This is followed by membrane translocation and cleavage of the modified precursor. Post-translationally, the structure of the 2,3-didehydrobutyrines is not discussed in PubMed:17071789.

It is found in the secreted. Lanthionine-containing peptide antibiotic (lantibiotic) active on Gram-positive bacteria. The bactericidal activity of lantibiotics is based on depolarization of energized bacterial cytoplasmic membranes, initiated by the formation of aqueous transmembrane pores. Lacks antibacterial activity against Gram-negative bacteria. The polypeptide is Lantibiotic paenibacillin (Paenibacillus polymyxa (Bacillus polymyxa)).